Here is a 90-residue protein sequence, read N- to C-terminus: Small ribosomal subunit protein uS19 (90 aa).

This sequence belongs to the universal ribosomal protein uS19 family.

Its function is as follows. Protein S19 forms a complex with S13 that binds strongly to the 16S ribosomal RNA. The sequence is that of Small ribosomal subunit protein uS19 from Rhizorhabdus wittichii (strain DSM 6014 / CCUG 31198 / JCM 15750 / NBRC 105917 / EY 4224 / RW1) (Sphingomonas wittichii).